We begin with the raw amino-acid sequence, 533 residues long: Flavin-dependent halogenase gsfI (533 aa).

FAD contacts are provided by Gly14, Gly17, and Glu47. Chloride is bound by residues Ser331 and Gly332.

Belongs to the flavin-dependent halogenase family.

The enzyme catalyses griseophenone C + FADH2 + chloride + O2 = griseophenone B + FAD + 2 H2O + H(+). It participates in secondary metabolite biosynthesis; terpenoid biosynthesis. Functionally, flavin-dependent halogenase; part of the gene cluster that mediates the biosynthesis of griseofulvin, an important antifungal drug that has been in use for a long time for treating dermatophyte infections. The first step of the pathway is the formation of the heptaketide backbone by gsfA which is initiated by priming with acetyl-CoA, followed by sequential condensations of 6 malonyl-CoA units. The resulting benzophenone can undergo a spontaneous dehydration to form norlichexanthone. However, the true precursor for the griseofulvin biosynthesis is not norlichexanthone, but the heptaketide benzophenone that is O-methylated at 3-OH by gsfB to produce griseophenone D which is further methylated at 9-OH by gsfC to yield griseophenone C. Griseophenone C is then substrate of halogenase gsfI which is responsible for the regio-specific chlorination at the C13 position to form griseophenone B. The cytochrome P450 gsfF catalyzes the coupling of orcinol and phloroglucinol rings in griseophenone B to form desmethyl-dehydrogriseofulvin A which is further methylated at 5-OH by gsfD to yield dehydrogriseofulvin. Finally, gsfE performs stereospecific reduction of enone 18 of dehydrogriseofulvin to afford the final product griseofulvin. This is Flavin-dependent halogenase gsfI from Penicillium aethiopicum.